Here is a 613-residue protein sequence, read N- to C-terminus: DNA mismatch repair protein MutL (613 aa).

The protein belongs to the DNA mismatch repair MutL/HexB family.

In terms of biological role, this protein is involved in the repair of mismatches in DNA. It is required for dam-dependent methyl-directed DNA mismatch repair. May act as a 'molecular matchmaker', a protein that promotes the formation of a stable complex between two or more DNA-binding proteins in an ATP-dependent manner without itself being part of a final effector complex. In Flavobacterium psychrophilum (strain ATCC 49511 / DSM 21280 / CIP 103535 / JIP02/86), this protein is DNA mismatch repair protein MutL.